A 304-amino-acid chain; its full sequence is UDP-3-O-acyl-N-acetylglucosamine deacetylase (304 aa).

Zn(2+) contacts are provided by His78, His237, and Asp241. His264 serves as the catalytic Proton donor.

The protein belongs to the LpxC family. The cofactor is Zn(2+).

It catalyses the reaction a UDP-3-O-[(3R)-3-hydroxyacyl]-N-acetyl-alpha-D-glucosamine + H2O = a UDP-3-O-[(3R)-3-hydroxyacyl]-alpha-D-glucosamine + acetate. It functions in the pathway glycolipid biosynthesis; lipid IV(A) biosynthesis; lipid IV(A) from (3R)-3-hydroxytetradecanoyl-[acyl-carrier-protein] and UDP-N-acetyl-alpha-D-glucosamine: step 2/6. Functionally, catalyzes the hydrolysis of UDP-3-O-myristoyl-N-acetylglucosamine to form UDP-3-O-myristoylglucosamine and acetate, the committed step in lipid A biosynthesis. The polypeptide is UDP-3-O-acyl-N-acetylglucosamine deacetylase (Acidithiobacillus ferrooxidans (strain ATCC 53993 / BNL-5-31) (Leptospirillum ferrooxidans (ATCC 53993))).